Reading from the N-terminus, the 198-residue chain is Orotate phosphoribosyltransferase (198 aa).

5-phospho-alpha-D-ribose 1-diphosphate contacts are provided by residues R108, K109, K112, H114, and E135–S143. Orotate is bound by residues T139 and R167.

It belongs to the purine/pyrimidine phosphoribosyltransferase family. PyrE subfamily. Homodimer. Requires Mg(2+) as cofactor.

The catalysed reaction is orotidine 5'-phosphate + diphosphate = orotate + 5-phospho-alpha-D-ribose 1-diphosphate. It participates in pyrimidine metabolism; UMP biosynthesis via de novo pathway; UMP from orotate: step 1/2. In terms of biological role, catalyzes the transfer of a ribosyl phosphate group from 5-phosphoribose 1-diphosphate to orotate, leading to the formation of orotidine monophosphate (OMP). The sequence is that of Orotate phosphoribosyltransferase from Synechocystis sp. (strain ATCC 27184 / PCC 6803 / Kazusa).